Here is a 496-residue protein sequence, read N- to C-terminus: Membrane-bound lytic murein transglycosylase F (496 aa).

An N-terminal signal peptide occupies residues 1 to 29 (MFFRPDFRPRCAKWLIATGLFLMLGACVE). The interval 30-267 (KPTTLERVKE…RLKDRYYGHV (238 aa)) is non-LT domain. The tract at residues 268–496 (DVLGYVGAYT…SGSSPDKPAL (229 aa)) is LT domain. E314 is a catalytic residue. Residues 464–496 (VADGNLHVPGVDKTQPPAPPAPASGSSPDKPAL) are disordered. The segment covering 486 to 496 (ASGSSPDKPAL) has biased composition (low complexity).

The protein in the N-terminal section; belongs to the bacterial solute-binding protein 3 family. In the C-terminal section; belongs to the transglycosylase Slt family.

It localises to the cell outer membrane. The enzyme catalyses Exolytic cleavage of the (1-&gt;4)-beta-glycosidic linkage between N-acetylmuramic acid (MurNAc) and N-acetylglucosamine (GlcNAc) residues in peptidoglycan, from either the reducing or the non-reducing ends of the peptidoglycan chains, with concomitant formation of a 1,6-anhydrobond in the MurNAc residue.. Its function is as follows. Murein-degrading enzyme that degrades murein glycan strands and insoluble, high-molecular weight murein sacculi, with the concomitant formation of a 1,6-anhydromuramoyl product. Lytic transglycosylases (LTs) play an integral role in the metabolism of the peptidoglycan (PG) sacculus. Their lytic action creates space within the PG sacculus to allow for its expansion as well as for the insertion of various structures such as secretion systems and flagella. The chain is Membrane-bound lytic murein transglycosylase F from Pseudomonas savastanoi pv. phaseolicola (strain 1448A / Race 6) (Pseudomonas syringae pv. phaseolicola (strain 1448A / Race 6)).